The primary structure comprises 116 residues: Putative gamma-glutamylcyclotransferase PH0828 (116 aa).

Residue 13–16 (YGTL) participates in substrate binding. The active-site Proton acceptor is the E76.

This sequence belongs to the gamma-glutamylcyclotransferase family.

In terms of biological role, putative gamma-glutamylcyclotransferase. The chain is Putative gamma-glutamylcyclotransferase PH0828 from Pyrococcus horikoshii (strain ATCC 700860 / DSM 12428 / JCM 9974 / NBRC 100139 / OT-3).